Here is a 294-residue protein sequence, read N- to C-terminus: Basic endochitinase (294 aa).

Positions 1–24 (MNIKVSLLFILPIFLLLLTSKVKA) are cleaved as a signal peptide. The 270-residue stretch at 25–294 (GDIVVYWGQD…GYSSAIRGAV (270 aa)) folds into the GH18 domain. Intrachain disulfides connect Cys44-Cys91 and Cys74-Cys81. The active-site Proton donor is the Glu151. Cys182 and Cys211 are disulfide-bonded.

The protein belongs to the glycosyl hydrolase 18 family. Chitinase class II subfamily.

The catalysed reaction is Random endo-hydrolysis of N-acetyl-beta-D-glucosaminide (1-&gt;4)-beta-linkages in chitin and chitodextrins.. In terms of biological role, this protein functions as a defense against chitin containing fungal pathogens. The polypeptide is Basic endochitinase (Nicotiana tabacum (Common tobacco)).